The primary structure comprises 383 residues: Transcription termination factor Rho (383 aa).

Residues Met1–Ser22 form a disordered region. Basic residues predominate over residues Lys8–Pro17. Residues Leu26 to Thr93 form the Rho RNA-BD domain. ATP contacts are provided by residues Gly132 to Gly137, Lys144 to Met149, and Arg175.

The protein belongs to the Rho family. As to quaternary structure, homohexamer. The homohexamer assembles into an open ring structure.

In terms of biological role, facilitates transcription termination by a mechanism that involves Rho binding to the nascent RNA, activation of Rho's RNA-dependent ATPase activity, and release of the mRNA from the DNA template. The sequence is that of Transcription termination factor Rho from Streptosporangium roseum (strain ATCC 12428 / DSM 43021 / JCM 3005 / KCTC 9067 / NCIMB 10171 / NRRL 2505 / NI 9100).